A 436-amino-acid polypeptide reads, in one-letter code: Sarcosine reductase complex component B subunit beta (436 aa).

Residue Sec-350 is part of the active site. Position 350 (Sec-350) is a non-standard amino acid, selenocysteine.

The protein belongs to the GrdB/GrdF/GrdH family. As to quaternary structure, heterotetramer of two alpha and two beta subunits. Component of the sarcosine reductase complex, together with components A and C. PB is substrate specific.

The enzyme catalyses acetyl phosphate + methylamine + [thioredoxin]-disulfide + H2O = sarcosine + [thioredoxin]-dithiol + phosphate + H(+). Its function is as follows. In the first step of sarcosine reductase, the substrate is bound to component PB via a Schiff base intermediate. Then the PB-activated substrate is nucleophilically attacked by the selenol anion of component PA to transform it to a carboxymethylated selenoether and the respective amine. By action of component PC, acetyl phosphate is formed, leaving component PA in its oxidized state. Finally component PA becomes reduced by the thioredoxin system to start a new catalytic cycle of reductive deamination. In Peptoclostridium acidaminophilum (Eubacterium acidaminophilum), this protein is Sarcosine reductase complex component B subunit beta (grdF).